A 448-amino-acid chain; its full sequence is DNA repair protein RadA (448 aa).

The C4-type zinc-finger motif lies at 10–27 (CSNCGNTSPKWSGQCFDC). 91–98 (GDPGIGKS) is a binding site for ATP. Positions 250 to 254 (KNRFG) match the RadA KNRFG motif motif. A lon-protease-like region spans residues 349–448 (EVYLSIAGGL…KDLKLLLGSS (100 aa)).

Belongs to the RecA family. RadA subfamily.

Functionally, DNA-dependent ATPase involved in processing of recombination intermediates, plays a role in repairing DNA breaks. Stimulates the branch migration of RecA-mediated strand transfer reactions, allowing the 3' invading strand to extend heteroduplex DNA faster. Binds ssDNA in the presence of ADP but not other nucleotides, has ATPase activity that is stimulated by ssDNA and various branched DNA structures, but inhibited by SSB. Does not have RecA's homology-searching function. This chain is DNA repair protein RadA, found in Rickettsia bellii (strain RML369-C).